We begin with the raw amino-acid sequence, 667 residues long: Sorting nexin mvp1 (667 aa).

Residues 221–268 form a disordered region; that stretch reads AGNLHSQQPPKFSVDSSVDDNAITPRKPFSKIPNRLSPSTQPLLSNSR. The span at 224 to 236 shows a compositional bias: polar residues; the sequence is LHSQQPPKFSVDS. In terms of domain architecture, PX spans 279–398; that stretch reads TSFPASLEMN…RVFFTEPNVF (120 aa). A 1,2-diacyl-sn-glycero-3-phospho-(1D-myo-inositol-3-phosphate) contacts are provided by Arg320, Ser322, and Lys346. The interval 574–594 is disordered; it reads ANSDESGRNRTFLNRSSKKRA.

Belongs to the sorting nexin family. In terms of assembly, homodimer. Forms an autoinhibited tetramer consisting of 2 homodimers that self-interact, wherein the membrane-interacting BAR surfaces are sequestered and the PX lipid-binding sites are occluded. Interacts with Vps1.

The protein resides in the cytoplasm. It localises to the endosome membrane. Required for vacuolar protein sorting. Component of the retromer-mediated endosome-to-Golgi retrograde pathway. Required for efficient cargo export from the endosome, promoting Vps1-mediated fission of retromer-coated tubules that bud from the endosome. The chain is Sorting nexin mvp1 (mvp1) from Schizosaccharomyces pombe (strain 972 / ATCC 24843) (Fission yeast).